Consider the following 546-residue polypeptide: CTP synthase (546 aa).

Positions 1-266 (MTTRYIFVTG…DQLVTKRFGI (266 aa)) are amidoligase domain. Ser-14 contributes to the CTP binding site. Ser-14 lines the UTP pocket. ATP-binding positions include 15–20 (SLGKGI) and Asp-72. Mg(2+) is bound by residues Asp-72 and Glu-140. CTP-binding positions include 147–149 (DIE), 187–192 (KTKPTQ), and Lys-223. Residues 187–192 (KTKPTQ) and Lys-223 contribute to the UTP site. An ATP-binding site is contributed by 239–241 (KDV). Positions 291-542 (TIGMVGKYIE…VAAAAAYQKR (252 aa)) constitute a Glutamine amidotransferase type-1 domain. Residue Gly-352 coordinates L-glutamine. Cys-379 functions as the Nucleophile; for glutamine hydrolysis in the catalytic mechanism. L-glutamine-binding positions include 380 to 383 (LGMQ), Glu-403, and Arg-470. Active-site residues include His-515 and Glu-517.

It belongs to the CTP synthase family. In terms of assembly, homotetramer.

It carries out the reaction UTP + L-glutamine + ATP + H2O = CTP + L-glutamate + ADP + phosphate + 2 H(+). The catalysed reaction is L-glutamine + H2O = L-glutamate + NH4(+). The enzyme catalyses UTP + NH4(+) + ATP = CTP + ADP + phosphate + 2 H(+). Its pathway is pyrimidine metabolism; CTP biosynthesis via de novo pathway; CTP from UDP: step 2/2. Allosterically activated by GTP, when glutamine is the substrate; GTP has no effect on the reaction when ammonia is the substrate. The allosteric effector GTP functions by stabilizing the protein conformation that binds the tetrahedral intermediate(s) formed during glutamine hydrolysis. Inhibited by the product CTP, via allosteric rather than competitive inhibition. Catalyzes the ATP-dependent amination of UTP to CTP with either L-glutamine or ammonia as the source of nitrogen. Regulates intracellular CTP levels through interactions with the four ribonucleotide triphosphates. In Shewanella pealeana (strain ATCC 700345 / ANG-SQ1), this protein is CTP synthase.